Here is a 387-residue protein sequence, read N- to C-terminus: Sulfopyruvate decarboxylase (387 aa).

It belongs to the TPP enzyme family. It depends on thiamine diphosphate as a cofactor.

The catalysed reaction is 3-sulfopyruvate + H(+) = sulfoacetaldehyde + CO2. It functions in the pathway cofactor biosynthesis; coenzyme M biosynthesis. Functionally, involved in the biosynthesis of the coenzyme M (2-mercaptoethanesulfonic acid). Catalyzes the decarboxylation of sulfopyruvate to sulfoacetaldehyde. Is not able to decarboxylate the analogous compounds 2-oxoglutarate or 2-oxosuberate. The sequence is that of Sulfopyruvate decarboxylase from Methanosarcina acetivorans (strain ATCC 35395 / DSM 2834 / JCM 12185 / C2A).